A 556-amino-acid chain; its full sequence is TNF receptor-associated factor 6-B (556 aa).

The RING-type; degenerate zinc finger occupies 72 to 111 (CPICLMALREAVQTPCGHRFCKACIVKSLRDAGHKCPVDN). 2 TRAF-type zinc fingers span residues 152–204 (RHLG…EDMS) and 205–261 (GHEL…NDLA). Residues 318–356 (SHQDCSQETRNLRETIEQLEGRLVRQDHQIRELIAKMET) adopt a coiled-coil conformation. Residues 384-533 (NGVFIWKIKG…NDTLFVRCAV (150 aa)) form the MATH domain.

Belongs to the TNF receptor-associated factor family. A subfamily. As to quaternary structure, homotrimer. Homooligomer.

It is found in the cytoplasm. The protein resides in the cell cortex. Its subcellular location is the nucleus. It localises to the lipid droplet. The enzyme catalyses S-ubiquitinyl-[E2 ubiquitin-conjugating enzyme]-L-cysteine + [acceptor protein]-L-lysine = [E2 ubiquitin-conjugating enzyme]-L-cysteine + N(6)-ubiquitinyl-[acceptor protein]-L-lysine.. It functions in the pathway protein modification; protein ubiquitination. Its function is as follows. E3 ubiquitin ligase that, together with UBE2N and UBE2V1, mediates the synthesis of 'Lys-63'-linked-polyubiquitin chains conjugated to proteins, such as IKBKG, IRAK1, AKT1 and AKT2. Also mediates ubiquitination of free/unanchored polyubiquitin chain that leads to MAP3K7 activation. In Xenopus laevis (African clawed frog), this protein is TNF receptor-associated factor 6-B (traf6-b).